The primary structure comprises 152 residues: UPF0735 ACT domain-containing protein CTC_00116 (152 aa).

In terms of domain architecture, ACT spans 76 to 151 (IISVTLNHRP…NVIKLDLIAM (76 aa)).

The protein belongs to the UPF0735 family.

In Clostridium tetani (strain Massachusetts / E88), this protein is UPF0735 ACT domain-containing protein CTC_00116.